We begin with the raw amino-acid sequence, 250 residues long: Leucyl/phenylalanyl-tRNA--protein transferase (250 aa).

This sequence belongs to the L/F-transferase family.

The protein localises to the cytoplasm. The enzyme catalyses N-terminal L-lysyl-[protein] + L-leucyl-tRNA(Leu) = N-terminal L-leucyl-L-lysyl-[protein] + tRNA(Leu) + H(+). The catalysed reaction is N-terminal L-arginyl-[protein] + L-leucyl-tRNA(Leu) = N-terminal L-leucyl-L-arginyl-[protein] + tRNA(Leu) + H(+). It carries out the reaction L-phenylalanyl-tRNA(Phe) + an N-terminal L-alpha-aminoacyl-[protein] = an N-terminal L-phenylalanyl-L-alpha-aminoacyl-[protein] + tRNA(Phe). Functions in the N-end rule pathway of protein degradation where it conjugates Leu, Phe and, less efficiently, Met from aminoacyl-tRNAs to the N-termini of proteins containing an N-terminal arginine or lysine. The polypeptide is Leucyl/phenylalanyl-tRNA--protein transferase (Cupriavidus taiwanensis (strain DSM 17343 / BCRC 17206 / CCUG 44338 / CIP 107171 / LMG 19424 / R1) (Ralstonia taiwanensis (strain LMG 19424))).